The following is a 377-amino-acid chain: Chaperone protein DnaJ (377 aa).

The J domain maps to 5–70 (DYYELLGLQK…EKKAKYDQFG (66 aa)). Residues 137 to 219 (GVEKEISVTR…CRGKGSVRKT (83 aa)) form a CR-type zinc finger. Zn(2+)-binding residues include Cys150, Cys153, Cys167, Cys170, Cys193, Cys196, Cys207, and Cys210. CXXCXGXG motif repeat units lie at residues 150 to 157 (CEHCHGSG), 167 to 174 (CPTCSGSG), 193 to 200 (CDTCRGTG), and 207 to 214 (CSECRGKG).

This sequence belongs to the DnaJ family. Homodimer. Zn(2+) is required as a cofactor.

It localises to the cytoplasm. Its function is as follows. Participates actively in the response to hyperosmotic and heat shock by preventing the aggregation of stress-denatured proteins and by disaggregating proteins, also in an autonomous, DnaK-independent fashion. Unfolded proteins bind initially to DnaJ; upon interaction with the DnaJ-bound protein, DnaK hydrolyzes its bound ATP, resulting in the formation of a stable complex. GrpE releases ADP from DnaK; ATP binding to DnaK triggers the release of the substrate protein, thus completing the reaction cycle. Several rounds of ATP-dependent interactions between DnaJ, DnaK and GrpE are required for fully efficient folding. Also involved, together with DnaK and GrpE, in the DNA replication of plasmids through activation of initiation proteins. The sequence is that of Chaperone protein DnaJ from Clostridium beijerinckii (strain ATCC 51743 / NCIMB 8052) (Clostridium acetobutylicum).